The primary structure comprises 480 residues: Proline--tRNA ligase (480 aa).

The protein belongs to the class-II aminoacyl-tRNA synthetase family. ProS type 3 subfamily. Homodimer.

The protein resides in the cytoplasm. The enzyme catalyses tRNA(Pro) + L-proline + ATP = L-prolyl-tRNA(Pro) + AMP + diphosphate. Its function is as follows. Catalyzes the attachment of proline to tRNA(Pro) in a two-step reaction: proline is first activated by ATP to form Pro-AMP and then transferred to the acceptor end of tRNA(Pro). The protein is Proline--tRNA ligase of Alkaliphilus oremlandii (strain OhILAs) (Clostridium oremlandii (strain OhILAs)).